We begin with the raw amino-acid sequence, 201 residues long: NADH-quinone oxidoreductase subunit C (201 aa).

The protein belongs to the complex I 30 kDa subunit family. In terms of assembly, NDH-1 is composed of 14 different subunits. Subunits NuoB, C, D, E, F, and G constitute the peripheral sector of the complex.

The protein localises to the cell inner membrane. It carries out the reaction a quinone + NADH + 5 H(+)(in) = a quinol + NAD(+) + 4 H(+)(out). Its function is as follows. NDH-1 shuttles electrons from NADH, via FMN and iron-sulfur (Fe-S) centers, to quinones in the respiratory chain. The immediate electron acceptor for the enzyme in this species is believed to be ubiquinone. Couples the redox reaction to proton translocation (for every two electrons transferred, four hydrogen ions are translocated across the cytoplasmic membrane), and thus conserves the redox energy in a proton gradient. This chain is NADH-quinone oxidoreductase subunit C, found in Azoarcus sp. (strain BH72).